The sequence spans 407 residues: Transcriptional regulator alnR (407 aa).

Positions Ser-23 to Tyr-53 form a DNA-binding region, zn(2)-C6 fungal-type. The interval Tyr-53–Asn-85 is disordered. Positions Glu-75–Asn-85 are enriched in polar residues.

Its subcellular location is the nucleus. Transcriptional regulator involved in the positive regulation of the expression of the gene cluster that mediates the biosynthesis of asperlin, a polyketide showing anti-inflammatory, antitumor and antibiotic activities. The polypeptide is Transcriptional regulator alnR (Emericella nidulans (strain FGSC A4 / ATCC 38163 / CBS 112.46 / NRRL 194 / M139) (Aspergillus nidulans)).